We begin with the raw amino-acid sequence, 284 residues long: Nucleotide-binding protein NGK_0463 (284 aa).

8-15 (GLSGSGKS) contributes to the ATP binding site. 58–61 (DVRS) lines the GTP pocket.

This sequence belongs to the RapZ-like family.

In terms of biological role, displays ATPase and GTPase activities. The sequence is that of Nucleotide-binding protein NGK_0463 from Neisseria gonorrhoeae (strain NCCP11945).